Here is a 303-residue protein sequence, read N- to C-terminus: L(+)-tartrate dehydratase subunit alpha (303 aa).

Iron-sulfur cluster contacts are provided by Cys-71, Cys-190, and Cys-277.

The protein belongs to the class-I fumarase family. In terms of assembly, tetramer of two alpha and two beta subunits. Iron-sulfur cluster serves as cofactor.

The catalysed reaction is (2R,3R)-tartrate = oxaloacetate + H2O. The sequence is that of L(+)-tartrate dehydratase subunit alpha (ttdA) from Escherichia coli O157:H7.